A 245-amino-acid chain; its full sequence is Myelin protein P0 (245 aa).

The first 28 residues, 1-28 (MEPSGLRTPCSLLALVLLSALVLTPTLA), serve as a signal peptide directing secretion. In terms of domain architecture, Ig-like V-type spans 29–143 (IEVYTDREVY…VGKSSYVHLQ (115 aa)). The Extracellular portion of the chain corresponds to 29 to 153 (IEVYTDREVY…VQEKGPARAG (125 aa)). Residues Cys49 and Cys125 are joined by a disulfide bond. Asn120 carries an N-linked (GlcNAc...) asparagine glycan. A helical transmembrane segment spans residues 154-174 (LILGIIIAVALALVIVVTILI). At 175 to 245 (LLIRYCWLRR…GIGDSRKDRK (71 aa)) the chain is on the cytoplasmic side. Basic and acidic residues-rich tracts occupy residues 199–208 (KLHKAKDSSK) and 224–245 (TRGK…KDRK). The tract at residues 199–245 (KLHKAKDSSKRSSRQTPILYAMLDQTRGKSSEKKAKGGIGDSRKDRK) is disordered.

The protein belongs to the myelin P0 protein family.

The protein localises to the cell membrane. Its function is as follows. Creation of an extracellular membrane face which guides the wrapping process and ultimately compacts adjacent lamellae. The sequence is that of Myelin protein P0 (mpz) from Xenopus laevis (African clawed frog).